We begin with the raw amino-acid sequence, 549 residues long: Cytoplasmic trehalase (549 aa).

Substrate-binding positions include Arg168, 175–176, Asn212, 221–223, 292–294, and Gly324; these read WD, RSQ, and RDE. Active-site proton donor/acceptor residues include Asp326 and Glu509. Glu525 is a binding site for substrate.

It belongs to the glycosyl hydrolase 37 family. Monomer.

The protein resides in the cytoplasm. The catalysed reaction is alpha,alpha-trehalose + H2O = alpha-D-glucose + beta-D-glucose. It participates in glycan degradation; trehalose degradation; D-glucose from alpha,alpha-trehalose: step 1/1. Functionally, hydrolyzes trehalose to glucose. Could be involved, in cells returning to low osmolarity conditions, in the utilization of the accumulated cytoplasmic trehalose, which was synthesized in response to high osmolarity. This chain is Cytoplasmic trehalase, found in Escherichia coli O127:H6 (strain E2348/69 / EPEC).